The chain runs to 494 residues: Protein transport protein Sec61 subunit alpha (494 aa).

Helical transmembrane passes span 36–56, 79–99, 122–142, 147–167, 177–197, 249–269, 294–314, 359–379, 426–446, and 450–470; these read LWTSIVVFLYLVCCQIPLYGI, LMELGISPIVTSGLVMQLLAG, LLGILITIGESVAYVLSGMYG, LGAGNAILIIVQLFTSGIIVI, YGIGSAISLFIATNVCESIVW, LLATVLVFVLVVYFQGFQVEL, MPIILQTALVSNLYFISQILY, IVSDPVHALLYIIFILASCAL, AAFGGMCIGALSIVADFMGAI, and TGILLAVTTIYQSWETILLAV.

Belongs to the SecY/SEC61-alpha family. In terms of assembly, heterotrimeric complex composed of SEC61-alpha, SEC61-beta and SEC61-gamma.

Its subcellular location is the endoplasmic reticulum membrane. Its function is as follows. Appears to play a crucial role in the insertion of secretory and membrane polypeptides into the ER. It is required for assembly of membrane and secretory proteins. The sequence is that of Protein transport protein Sec61 subunit alpha from Pyrenomonas salina.